A 667-amino-acid chain; its full sequence is Primary amine oxidase (667 aa).

The first 18 residues, 1–18 (KFALFSVLTLLSFHAVFS), serve as a signal peptide directing secretion. The N-linked (GlcNAc...) asparagine glycan is linked to N149. An intrachain disulfide couples C155 to C176. The tract at residues 216–246 (PTAENTEYQVSKQSPPFGPKQHSLTSHQPQG) is disordered. Residues 218–229 (AENTEYQVSKQS) show a composition bias toward polar residues. The N-linked (GlcNAc...) asparagine glycan is linked to N252. A substrate-binding site is contributed by 316–327 (FFDSGEFGFGLS). The active-site Proton acceptor is the D318. An intrachain disulfide couples C337 to C363. An N-linked (GlcNAc...) asparagine glycan is attached at N382. 402 to 407 (VGNYDN) contributes to the substrate binding site. Y405 (schiff-base intermediate with substrate; via topaquinone) is an active-site residue. Y405 is subject to 2',4',5'-topaquinone. Residues H460 and H462 each coordinate Cu cation. Residues D469, F470, and D471 each coordinate Mn(2+). Residue N576 is glycosylated (N-linked (GlcNAc...) asparagine). Mn(2+) contacts are provided by D610 and I611. H621 provides a ligand contact to Cu cation.

It belongs to the copper/topaquinone oxidase family. Homodimer. Cu cation serves as cofactor. Requires Zn(2+) as cofactor. It depends on L-topaquinone as a cofactor. The cofactor is Mn(2+). Glycosylated; contains two carbohydrate chains per monomer. In terms of processing, topaquinone (TPQ) is generated by copper-dependent autoxidation of a specific tyrosyl residue.

The catalysed reaction is a primary methyl amine + O2 + H2O = an aldehyde + H2O2 + NH4(+). This is Primary amine oxidase from Lens culinaris (Lentil).